A 731-amino-acid polypeptide reads, in one-letter code: Replication restart protein PriA (731 aa).

Residues 1–98 (MSVAHVALPV…HPIGDVLFHA (98 aa)) are 3'BD. The segment at 115 to 177 (WYWFATEQGQ…RGKGLAELAC (63 aa)) is WH. Residues 200 to 375 (TEQATAVGAI…VRQGKYRQLT (176 aa)) are helicase lobe 1. Residues 210–376 (HSAADRFSAW…RQGKYRQLTL (167 aa)) enclose the Helicase ATP-binding domain. ATP is bound at residue 223-230 (GITGSGKT). 6 residues coordinate ADP: G226, G228, K229, T230, E231, and R263. Positions 319-322 (DEEH) match the DEAH box motif. The Aromatic-rich loop (ARL) signature appears at 326-340 (YKQQEGWRYHARDLA). Positions 387-430 (QQHVLDLKGQPLQAGLSPALISRMRQHLQADNQVILFLNRRGFA) are helicase lobe 2, N-terminus. The interval 431 to 485 (PALLCHDCGWIAECPRCDSYYTLHQAQHHLRCHHCDSQRPIPRQCPSCGSTHLVP) is CRR. The Zn(2+) site is built by C435, C438, C444, C447, C462, C465, C475, and C478. The Helicase C-terminal domain maps to 470 to 637 (PIPRQCPSCG…QLPPWTSHVL (168 aa)). Residues 486–626 (VGIGTEQLEQ…AEQALAERQT (141 aa)) are helicase lobe 2, C-terminus. K543 serves as a coordination point for ADP. Residues 633-731 (TSHVLIRAED…WVLDVDPIEG (99 aa)) are CTD.

The protein belongs to the helicase family. PriA subfamily. Binds SSB. Component of the replication restart primosome. Zn(2+) serves as cofactor.

It catalyses the reaction Couples ATP hydrolysis with the unwinding of duplex DNA by translocating in the 3'-5' direction.. It carries out the reaction ATP + H2O = ADP + phosphate + H(+). With respect to regulation, ATPase activity is stimulated by single-stranded binding protein (SSB). In terms of biological role, initiates the restart of stalled replication forks, which reloads the replicative helicase on sites other than the origin of replication. Recognizes and binds to abandoned replication forks and remodels them to uncover a helicase loading site. Promotes assembly of the primosome at these replication forks. Recognizes abandoned replication forks and remodels SSB on ssDNA to uncover a loading site for DnaB. Binds replication fork DNA, has DNA-dependent ATPase activity in the presence of replication fork DNA, restores normal cell growth and SOS induction to E.coli mutant pirA304. The polypeptide is Replication restart protein PriA (Klebsiella pneumoniae subsp. pneumoniae (strain ATCC 700721 / MGH 78578)).